A 173-amino-acid polypeptide reads, in one-letter code: Ribosome maturation factor RimM (173 aa).

In terms of domain architecture, PRC barrel spans 95 to 169; the sequence is EGSYYFKDIL…RIEVTLLEGL (75 aa).

This sequence belongs to the RimM family. In terms of assembly, binds ribosomal protein uS19.

Its subcellular location is the cytoplasm. Its function is as follows. An accessory protein needed during the final step in the assembly of 30S ribosomal subunit, possibly for assembly of the head region. Essential for efficient processing of 16S rRNA. May be needed both before and after RbfA during the maturation of 16S rRNA. It has affinity for free ribosomal 30S subunits but not for 70S ribosomes. This is Ribosome maturation factor RimM from Lactobacillus johnsonii (strain CNCM I-12250 / La1 / NCC 533).